Here is a 194-residue protein sequence, read N- to C-terminus: Recombination protein RecR (194 aa).

The segment at 52 to 67 adopts a C4-type zinc-finger fold; that stretch reads CTECRTFTEEEVCHIC. One can recognise a Toprim domain in the interval 76-171; that stretch reads GQICVVESPA…EASRIAHGVP (96 aa).

It belongs to the RecR family.

In terms of biological role, may play a role in DNA repair. It seems to be involved in an RecBC-independent recombinational process of DNA repair. It may act with RecF and RecO. In Vibrio campbellii (strain ATCC BAA-1116), this protein is Recombination protein RecR.